Reading from the N-terminus, the 249-residue chain is Pleckstrin homology domain-containing family F member 2 (249 aa).

Ser-16 is modified (phosphoserine). Residues 35–131 (VLIGEGVLTK…WMNHINKCVT (97 aa)) form the PH domain. Lys-44 carries the N6-acetyllysine modification. The segment at 152–212 (DSEATVCMRC…ICDFCYDLLS (61 aa)) adopts an FYVE-type zinc-finger fold. Zn(2+) contacts are provided by Cys-158, Cys-161, Cys-175, Cys-178, Cys-183, Cys-186, Cys-204, and Cys-207. Over residues 221 to 233 (PTRSDSYSQSLKS) the composition is skewed to polar residues. The disordered stretch occupies residues 221–249 (PTRSDSYSQSLKSPLNDASDDDDDDDSSD). Positions 238–249 (ASDDDDDDDSSD) are enriched in acidic residues. Phosphoserine is present on residues Ser-239 and Ser-248.

May interact with EEA1. Expressed in brain, stomach and thymus, as well as in kidney, spleen, and skeletal muscle. Also expressed in peripheral blood mononuclear cells and dendritic cells.

The protein resides in the early endosome membrane. Its subcellular location is the endoplasmic reticulum. In terms of biological role, may play a role in early endosome fusion upstream of RAB5, hence regulating receptor trafficking and fluid-phase transport. Enhances cellular sensitivity to TNF-induced apoptosis. This is Pleckstrin homology domain-containing family F member 2 (Plekhf2) from Mus musculus (Mouse).